The chain runs to 257 residues: Acetylglutamate kinase (257 aa).

Substrate is bound by residues 41–42, arginine 63, and asparagine 156; that span reads GG.

Belongs to the acetylglutamate kinase family. ArgB subfamily.

Its subcellular location is the cytoplasm. It catalyses the reaction N-acetyl-L-glutamate + ATP = N-acetyl-L-glutamyl 5-phosphate + ADP. It participates in amino-acid biosynthesis; L-arginine biosynthesis; N(2)-acetyl-L-ornithine from L-glutamate: step 2/4. In terms of biological role, catalyzes the ATP-dependent phosphorylation of N-acetyl-L-glutamate. The polypeptide is Acetylglutamate kinase (Geobacillus sp. (strain WCH70)).